The chain runs to 446 residues: Exodeoxyribonuclease 7 large subunit (446 aa).

This sequence belongs to the XseA family. Heterooligomer composed of large and small subunits.

It is found in the cytoplasm. It carries out the reaction Exonucleolytic cleavage in either 5'- to 3'- or 3'- to 5'-direction to yield nucleoside 5'-phosphates.. Its function is as follows. Bidirectionally degrades single-stranded DNA into large acid-insoluble oligonucleotides, which are then degraded further into small acid-soluble oligonucleotides. The protein is Exodeoxyribonuclease 7 large subunit of Streptococcus pneumoniae (strain ATCC BAA-255 / R6).